Here is a 552-residue protein sequence, read N- to C-terminus: MFS-type transporter atr4 (552 aa).

Residues 1–102 (MEDPKSLSAP…NIVDWDGPND (102 aa)) form a disordered region. The segment covering 16–27 (ADTTTADETPAA) has biased composition (low complexity). 2 stretches are compositionally biased toward polar residues: residues 38-47 (KAGSESSENT) and 71-80 (LRNSSVSRSN). N-linked (GlcNAc...) asparagine glycosylation is present at N73. Transmembrane regions (helical) follow at residues 118–138 (IFLV…LATG), 153–173 (LGSL…LVIA), 182–202 (MPLY…CALG), 214–234 (LQGC…SDLI), 244–264 (GIYA…GGFL), and 272–292 (WLMW…FVVM). N-linked (GlcNAc...) asparagine glycosylation is present at N314. 6 consecutive transmembrane segments (helical) span residues 346–366 (PIIF…YLLF), 385–405 (GLVY…FGVF), 425–445 (LLPM…YGWS), 452–472 (WIVP…TLVC), 498–518 (VVGA…GIGW), and 521–541 (SLLA…YVYG).

The protein belongs to the major facilitator superfamily.

The protein localises to the cell membrane. Its function is as follows. MFS-type transporter; part of the gene cluster that mediates the biosynthesis of atranorin, a depside of polyketide origin that accumulates in the cortical or medullary layers of lichen thalli. The sequence is that of MFS-type transporter atr4 from Stereocaulon alpinum (Alpine snow lichen).